The primary structure comprises 188 residues: ATP synthase subunit delta (188 aa).

Belongs to the ATPase delta chain family. In terms of assembly, F-type ATPases have 2 components, F(1) - the catalytic core - and F(0) - the membrane proton channel. F(1) has five subunits: alpha(3), beta(3), gamma(1), delta(1), epsilon(1). F(0) has three main subunits: a(1), b(2) and c(10-14). The alpha and beta chains form an alternating ring which encloses part of the gamma chain. F(1) is attached to F(0) by a central stalk formed by the gamma and epsilon chains, while a peripheral stalk is formed by the delta and b chains.

It localises to the cell inner membrane. In terms of biological role, f(1)F(0) ATP synthase produces ATP from ADP in the presence of a proton or sodium gradient. F-type ATPases consist of two structural domains, F(1) containing the extramembraneous catalytic core and F(0) containing the membrane proton channel, linked together by a central stalk and a peripheral stalk. During catalysis, ATP synthesis in the catalytic domain of F(1) is coupled via a rotary mechanism of the central stalk subunits to proton translocation. Its function is as follows. This protein is part of the stalk that links CF(0) to CF(1). It either transmits conformational changes from CF(0) to CF(1) or is implicated in proton conduction. This Rhizobium meliloti (strain 1021) (Ensifer meliloti) protein is ATP synthase subunit delta.